Here is a 106-residue protein sequence, read N- to C-terminus: MLFYFGLAVIFLIDSSQTQTLYKVNEVGGSQVDRNLCGSDIPTAIKDICGIKKRQNIPRKYGRDPNNILEKEEFAKRFLRVRRQTTDIVEECCVENCAIEEIAEYC.

An N-terminal signal peptide occupies residues 1–18 (MLFYFGLAVIFLIDSSQT). A propeptide spanning residues 19-34 (QTLYKVNEVGGSQVDR) is cleaved from the precursor. Disulfide bonds link Cys-37–Cys-93, Cys-49–Cys-106, and Cys-92–Cys-97. Positions 52–82 (KKRQNIPRKYGRDPNNILEKEEFAKRFLRVR) are cleaved as a propeptide — c peptide.

It belongs to the insulin family.

Its subcellular location is the secreted. Functionally, insulin decreases blood glucose concentration. May have evolved to activate insulin receptors (INSR) in vertebrates. Molecular docking studies reveals unique interaction with the human insulin receptor. In vivo, insulin-like peptide injection reduces blood glucose levels in two models of zebrafish diabetes (streptozotocin- and glucose-induced). Also shorter swimming distance of zebrafish larvae, an effect which is not observed with human insulin. This is Insulin-like peptide 03 from Exaiptasia diaphana (Tropical sea anemone).